A 468-amino-acid chain; its full sequence is Pentatricopeptide repeat-containing protein At5g46680 (468 aa).

PPR repeat units follow at residues 12 to 46, 47 to 81, 82 to 116, 117 to 152, 153 to 183, 187 to 221, 222 to 256, 257 to 291, 293 to 327, 328 to 362, 363 to 393, and 394 to 428; these read STKL…GVLP, DVIT…GIEP, DVTT…GLSP, DMWS…GLVP, GIDT…LKSR, ELMT…GYTP, NAVT…GYTF, DGFA…GTRS, DIVS…GLKP, DDYT…GMQP, SVVT…MEVR, and DEFT…GMKI.

The protein belongs to the PPR family. P subfamily.

This is Pentatricopeptide repeat-containing protein At5g46680 from Arabidopsis thaliana (Mouse-ear cress).